Here is a 72-residue protein sequence, read N- to C-terminus: UPF0270 protein YheU (72 aa).

This sequence belongs to the UPF0270 family.

This chain is UPF0270 protein YheU, found in Salmonella agona (strain SL483).